The following is a 422-amino-acid chain: Protein phosphatase methylesterase 1 (422 aa).

The disordered stretch occupies residues 1–27 (MSDMFRKSVLNKLPHLPPTRAPWADES). Active-site residues include S207, D234, and H371.

Belongs to the AB hydrolase superfamily.

It catalyses the reaction [phosphatase 2A protein]-C-terminal L-leucine methyl ester + H2O = [phosphatase 2A protein]-C-terminal L-leucine + methanol + H(+). Demethylates proteins that have been reversibly carboxymethylated. Demethylates the phosphatase PP2A catalytic subunit. This Cryptococcus neoformans var. neoformans serotype D (strain JEC21 / ATCC MYA-565) (Filobasidiella neoformans) protein is Protein phosphatase methylesterase 1 (PPE1).